The chain runs to 371 residues: Probable palmitoyltransferase ZDHHC11B (371 aa).

2 helical membrane passes run 43-63 and 70-90; these read VVTW…FIPL and YIAY…HLIA. Positions 125 to 175 constitute a DHHC domain; it reads QFCHLCKVTVNKKTKHCISCNKCVSGFDHHCKWINNCVGSRNYWFFFSTVA. Cys155 serves as the catalytic S-palmitoyl cysteine intermediate. 3 consecutive transmembrane segments (helical) span residues 177–197, 216–236, and 239–259; these read ATAG…QYLV, TWLL…VVII, and LVLL…IFHI. Residues 335 to 371 are disordered; the sequence is DGDSKAQEADDAPSTSTLGLQQETTEPMKTDSAESED. The segment covering 347-359 has biased composition (polar residues); it reads PSTSTLGLQQETT. Positions 360 to 371 are enriched in basic and acidic residues; sequence EPMKTDSAESED.

It belongs to the DHHC palmitoyltransferase family.

It is found in the membrane. The catalysed reaction is L-cysteinyl-[protein] + hexadecanoyl-CoA = S-hexadecanoyl-L-cysteinyl-[protein] + CoA. In terms of biological role, probable palmitoyltransferase that could catalyze the addition of palmitate onto various protein substrates and be involved in a variety of cellular processes. May play a role in cell proliferation. This is Probable palmitoyltransferase ZDHHC11B from Homo sapiens (Human).